The sequence spans 280 residues: Pantothenate synthetase (280 aa).

32-39 contributes to the ATP binding site; it reads MGALHAGH. The active-site Proton donor is the His-39. Gln-63 contributes to the (R)-pantoate binding site. Gln-63 serves as a coordination point for beta-alanine. 149-152 is an ATP binding site; it reads GEKD. Gln-155 lines the (R)-pantoate pocket. Residues Val-178 and 186–189 contribute to the ATP site; that span reads MSSR.

Belongs to the pantothenate synthetase family. In terms of assembly, homodimer.

It is found in the cytoplasm. It carries out the reaction (R)-pantoate + beta-alanine + ATP = (R)-pantothenate + AMP + diphosphate + H(+). The protein operates within cofactor biosynthesis; (R)-pantothenate biosynthesis; (R)-pantothenate from (R)-pantoate and beta-alanine: step 1/1. Functionally, catalyzes the condensation of pantoate with beta-alanine in an ATP-dependent reaction via a pantoyl-adenylate intermediate. The protein is Pantothenate synthetase of Ruegeria sp. (strain TM1040) (Silicibacter sp.).